A 585-amino-acid polypeptide reads, in one-letter code: Poly(A) RNA polymerase, mitochondrial (585 aa).

Residues methionine 1 to alanine 37 constitute a mitochondrion transit peptide. The residue at position 90 (lysine 90) is an N6-acetyllysine. ATP contacts are provided by residues tyrosine 107–serine 109 and glycine 244–cysteine 245. Residues aspartate 246 and aspartate 248 each contribute to the Mg(2+) site. In terms of domain architecture, PAP-associated spans glutamate 441 to serine 486. The disordered stretch occupies residues proline 537–alanine 585. The span at isoleucine 564–alanine 585 shows a compositional bias: polar residues.

This sequence belongs to the DNA polymerase type-B-like family. As to quaternary structure, homodimer. Mg(2+) is required as a cofactor. The cofactor is Mn(2+).

The protein resides in the cytoplasm. Its subcellular location is the mitochondrion. The catalysed reaction is RNA(n) + ATP = RNA(n)-3'-adenine ribonucleotide + diphosphate. In terms of biological role, polymerase that creates the 3' poly(A) tail of mitochondrial transcripts. Can use all four nucleotides, but has higher activity with ATP and UTP (in vitro). Plays a role in replication-dependent histone mRNA degradation. May be involved in the terminal uridylation of mature histone mRNAs before their degradation is initiated. Might be responsible for the creation of some UAA stop codons which are not encoded in mtDNA. The polypeptide is Poly(A) RNA polymerase, mitochondrial (Mtpap) (Mus musculus (Mouse)).